Reading from the N-terminus, the 409-residue chain is Argininosuccinate synthase (409 aa).

Residues 12–20 (AYSGGLDTS) and Ala-39 each bind ATP. 2 residues coordinate L-citrulline: Tyr-90 and Ser-95. Gly-120 contributes to the ATP binding site. L-aspartate-binding residues include Thr-122, Asn-126, and Asp-127. Position 126 (Asn-126) interacts with L-citrulline. 5 residues coordinate L-citrulline: Arg-130, Ser-181, Ser-190, Glu-266, and Tyr-278.

This sequence belongs to the argininosuccinate synthase family. Type 1 subfamily. In terms of assembly, homotetramer.

It localises to the cytoplasm. It carries out the reaction L-citrulline + L-aspartate + ATP = 2-(N(omega)-L-arginino)succinate + AMP + diphosphate + H(+). It participates in amino-acid biosynthesis; L-arginine biosynthesis; L-arginine from L-ornithine and carbamoyl phosphate: step 2/3. In Gluconacetobacter diazotrophicus (strain ATCC 49037 / DSM 5601 / CCUG 37298 / CIP 103539 / LMG 7603 / PAl5), this protein is Argininosuccinate synthase.